Reading from the N-terminus, the 108-residue chain is Putative transmembrane protein ORF108 (108 aa).

The next 3 helical transmembrane spans lie at 11–31, 33–53, and 69–89; these read FIMG…SSII, IAMT…TVHF, and VGFL…LLII.

Its subcellular location is the host membrane. This is Putative transmembrane protein ORF108 from Acidianus hospitalis (AFV-1).